Reading from the N-terminus, the 218-residue chain is Glycerol-3-phosphate acyltransferase (218 aa).

A run of 5 helical transmembrane segments spans residues 10–30 (LTLG…FGLI), 60–80 (DLAA…VLLA), 88–108 (PAII…PVWL), 125–145 (SAAW…AFLF), and 165–185 (AFDQ…LIFI).

This sequence belongs to the PlsY family. In terms of assembly, probably interacts with PlsX.

The protein resides in the cell inner membrane. It catalyses the reaction an acyl phosphate + sn-glycerol 3-phosphate = a 1-acyl-sn-glycero-3-phosphate + phosphate. Its pathway is lipid metabolism; phospholipid metabolism. Catalyzes the transfer of an acyl group from acyl-phosphate (acyl-PO(4)) to glycerol-3-phosphate (G3P) to form lysophosphatidic acid (LPA). This enzyme utilizes acyl-phosphate as fatty acyl donor, but not acyl-CoA or acyl-ACP. In Caulobacter vibrioides (strain ATCC 19089 / CIP 103742 / CB 15) (Caulobacter crescentus), this protein is Glycerol-3-phosphate acyltransferase.